A 306-amino-acid chain; its full sequence is Glutaminase (306 aa).

Substrate contacts are provided by Ser64, Asn115, Glu159, Asn166, Tyr190, Tyr242, and Val260.

The protein belongs to the glutaminase family. In terms of assembly, homotetramer.

The enzyme catalyses L-glutamine + H2O = L-glutamate + NH4(+). The sequence is that of Glutaminase from Vibrio vulnificus (strain YJ016).